The following is a 350-amino-acid chain: Dihydroorotase (350 aa).

Zn(2+) contacts are provided by H17 and H19. Residues 19 to 21 (HLR) and N45 contribute to the substrate site. Zn(2+)-binding residues include K103, H140, and H178. At K103 the chain carries N6-carboxylysine. H140 provides a ligand contact to substrate. L223 contacts substrate. D251 lines the Zn(2+) pocket. Residue D251 is part of the active site. Substrate is bound by residues H255 and A267.

This sequence belongs to the metallo-dependent hydrolases superfamily. DHOase family. Class II DHOase subfamily. As to quaternary structure, homodimer. It depends on Zn(2+) as a cofactor.

The enzyme catalyses (S)-dihydroorotate + H2O = N-carbamoyl-L-aspartate + H(+). It functions in the pathway pyrimidine metabolism; UMP biosynthesis via de novo pathway; (S)-dihydroorotate from bicarbonate: step 3/3. In terms of biological role, catalyzes the reversible cyclization of carbamoyl aspartate to dihydroorotate. The sequence is that of Dihydroorotase from Erwinia tasmaniensis (strain DSM 17950 / CFBP 7177 / CIP 109463 / NCPPB 4357 / Et1/99).